Reading from the N-terminus, the 352-residue chain is Ion-translocating oxidoreductase complex subunit D (352 aa).

4 helical membrane-spanning segments follow: residues 20–40 (IMLLVLLAAVPGIAAQLWFFG), 42–62 (GTLVQILLASVSALLAEALVL), 89–109 (IPPLAPWWMVVLGTVFAVIIA), and 123–143 (PAMIGYVVLLISFPVQMTSWL). The residue at position 187 (Thr-187) is an FMN phosphoryl threonine. 5 consecutive transmembrane segments (helical) span residues 214–234 (ILAGAGWQWVNLAWLAGGVWL), 242–262 (WHIPLSFLVTLALCATLGWLF), 267–287 (LAAPQIHLLSGATMLGAFFIL), 301–321 (LIFGALAGLLVWLIRSFGGYP), and 322–342 (DGVAFAVLLANITVPLIDYYT).

Belongs to the NqrB/RnfD family. In terms of assembly, the complex is composed of six subunits: RsxA, RsxB, RsxC, RsxD, RsxE and RsxG. FMN is required as a cofactor.

The protein localises to the cell inner membrane. In terms of biological role, part of a membrane-bound complex that couples electron transfer with translocation of ions across the membrane. Required to maintain the reduced state of SoxR. This chain is Ion-translocating oxidoreductase complex subunit D, found in Escherichia coli O127:H6 (strain E2348/69 / EPEC).